We begin with the raw amino-acid sequence, 478 residues long: Tubulin gamma chain (478 aa).

141–147 (AGGTGSG) serves as a coordination point for GTP. The interval 451-478 (ISQKESSSLANENGNGANNKPGKSAMAL) is disordered. Over residues 459–468 (LANENGNGAN) the composition is skewed to polar residues.

It belongs to the tubulin family.

Its subcellular location is the cytoplasm. It localises to the cytoskeleton. The protein resides in the microtubule organizing center. It is found in the centrosome. Functionally, tubulin is the major constituent of microtubules. The gamma chain is found at microtubule organizing centers (MTOC) such as the spindle poles or the centrosome, suggesting that it is involved in the minus-end nucleation of microtubule assembly. The chain is Tubulin gamma chain from Reticulomyxa filosa.